A 219-amino-acid chain; its full sequence is Octanoyltransferase (219 aa).

In terms of domain architecture, BPL/LPL catalytic spans 32–207 (ASSPDQLWIV…TFSHNLGYQN (176 aa)). Residues 71–78 (RGGQVTYH), 138–140 (SLG), and 151–153 (GLA) each bind substrate. The active-site Acyl-thioester intermediate is the C169.

Belongs to the LipB family.

Its subcellular location is the cytoplasm. It catalyses the reaction octanoyl-[ACP] + L-lysyl-[protein] = N(6)-octanoyl-L-lysyl-[protein] + holo-[ACP] + H(+). The protein operates within protein modification; protein lipoylation via endogenous pathway; protein N(6)-(lipoyl)lysine from octanoyl-[acyl-carrier-protein]: step 1/2. In terms of biological role, catalyzes the transfer of endogenously produced octanoic acid from octanoyl-acyl-carrier-protein onto the lipoyl domains of lipoate-dependent enzymes. Lipoyl-ACP can also act as a substrate although octanoyl-ACP is likely to be the physiological substrate. The chain is Octanoyltransferase from Shewanella sediminis (strain HAW-EB3).